A 474-amino-acid chain; its full sequence is ATP synthase subunit beta (474 aa).

Position 151–158 (151–158 (GGAGVGKT)) interacts with ATP.

Belongs to the ATPase alpha/beta chains family. F-type ATPases have 2 components, CF(1) - the catalytic core - and CF(0) - the membrane proton channel. CF(1) has five subunits: alpha(3), beta(3), gamma(1), delta(1), epsilon(1). CF(0) has four main subunits: a(1), b(1), b'(1) and c(9-12).

The protein resides in the cell inner membrane. It catalyses the reaction ATP + H2O + 4 H(+)(in) = ADP + phosphate + 5 H(+)(out). Functionally, produces ATP from ADP in the presence of a proton gradient across the membrane. The catalytic sites are hosted primarily by the beta subunits. This Roseobacter denitrificans (strain ATCC 33942 / OCh 114) (Erythrobacter sp. (strain OCh 114)) protein is ATP synthase subunit beta.